We begin with the raw amino-acid sequence, 148 residues long: Thioredoxin H8 (148 aa).

Residues 1–145 (MGANVSTPDQ…LERKLNKYTQ (145 aa)) enclose the Thioredoxin domain. Residues cysteine 71 and cysteine 74 each act as nucleophile in the active site. Cysteine 71 and cysteine 74 are oxidised to a cystine.

The protein belongs to the thioredoxin family. Plant H-type subfamily.

Its subcellular location is the cytoplasm. Probable thiol-disulfide oxidoreductase that may be involved in the redox regulation of a number of cytosolic enzymes. In Arabidopsis thaliana (Mouse-ear cress), this protein is Thioredoxin H8 (TRX8).